The sequence spans 246 residues: Bis(5'-nucleosyl)-tetraphosphatase PrpE [asymmetrical] (246 aa).

The protein belongs to the PrpE family. Ni(2+) is required as a cofactor.

It catalyses the reaction P(1),P(4)-bis(5'-guanosyl) tetraphosphate + H2O = GMP + GTP + 2 H(+). Functionally, asymmetrically hydrolyzes Ap4p to yield AMP and ATP. This chain is Bis(5'-nucleosyl)-tetraphosphatase PrpE [asymmetrical], found in Bacillus cereus (strain ZK / E33L).